The primary structure comprises 158 residues: Deoxyuridine 5'-triphosphate nucleotidohydrolase (158 aa).

Substrate is bound by residues arginine 75–glycine 77, asparagine 88, threonine 92–aspartate 94, and lysine 102.

It belongs to the dUTPase family. Mg(2+) is required as a cofactor.

It carries out the reaction dUTP + H2O = dUMP + diphosphate + H(+). The protein operates within pyrimidine metabolism; dUMP biosynthesis; dUMP from dCTP (dUTP route): step 2/2. Its function is as follows. This enzyme is involved in nucleotide metabolism: it produces dUMP, the immediate precursor of thymidine nucleotides and it decreases the intracellular concentration of dUTP so that uracil cannot be incorporated into DNA. The chain is Deoxyuridine 5'-triphosphate nucleotidohydrolase from Bifidobacterium longum subsp. infantis (strain ATCC 15697 / DSM 20088 / JCM 1222 / NCTC 11817 / S12).